The following is a 293-amino-acid chain: Elongation factor Ts (293 aa).

Residues 80–83 (TDFV) are involved in Mg(2+) ion dislocation from EF-Tu.

Belongs to the EF-Ts family.

Its subcellular location is the cytoplasm. In terms of biological role, associates with the EF-Tu.GDP complex and induces the exchange of GDP to GTP. It remains bound to the aminoacyl-tRNA.EF-Tu.GTP complex up to the GTP hydrolysis stage on the ribosome. The protein is Elongation factor Ts of Staphylococcus aureus (strain USA300).